We begin with the raw amino-acid sequence, 372 residues long: Queuine tRNA-ribosyltransferase (372 aa).

Asp92 (proton acceptor) is an active-site residue. Residues Asp92–Tyr96, Asp146, Gln188, and Gly215 each bind substrate. The segment at Gly246–Glu252 is RNA binding. Catalysis depends on Asp265, which acts as the Nucleophile. The tract at residues Thr270–Arg274 is RNA binding; important for wobble base 34 recognition. The Zn(2+) site is built by Cys303, Cys305, Cys308, and His334.

It belongs to the queuine tRNA-ribosyltransferase family. As to quaternary structure, homodimer. Within each dimer, one monomer is responsible for RNA recognition and catalysis, while the other monomer binds to the replacement base PreQ1. The cofactor is Zn(2+).

It carries out the reaction 7-aminomethyl-7-carbaguanine + guanosine(34) in tRNA = 7-aminomethyl-7-carbaguanosine(34) in tRNA + guanine. Its pathway is tRNA modification; tRNA-queuosine biosynthesis. Catalyzes the base-exchange of a guanine (G) residue with the queuine precursor 7-aminomethyl-7-deazaguanine (PreQ1) at position 34 (anticodon wobble position) in tRNAs with GU(N) anticodons (tRNA-Asp, -Asn, -His and -Tyr). Catalysis occurs through a double-displacement mechanism. The nucleophile active site attacks the C1' of nucleotide 34 to detach the guanine base from the RNA, forming a covalent enzyme-RNA intermediate. The proton acceptor active site deprotonates the incoming PreQ1, allowing a nucleophilic attack on the C1' of the ribose to form the product. After dissociation, two additional enzymatic reactions on the tRNA convert PreQ1 to queuine (Q), resulting in the hypermodified nucleoside queuosine (7-(((4,5-cis-dihydroxy-2-cyclopenten-1-yl)amino)methyl)-7-deazaguanosine). The polypeptide is Queuine tRNA-ribosyltransferase (Prochlorococcus marinus (strain MIT 9211)).